The primary structure comprises 340 residues: Mitochondrial amidoxime-reducing component 1 (340 aa).

A lipid anchor (N-myristoyl glycine) is attached at G2. The Mitochondrial matrix segment spans residues 2–24 (GAGSWALTLFGFSAFRVPGQPRS). The helical; Signal-anchor for type II membrane protein transmembrane segment at 25-44 (TWLGVAALGLAAVALGTVAW) threads the bilayer. Over 45-340 (RRARPRRRRR…VGDPVYLLGQ (296 aa)) the chain is Cytoplasmic. K70, S71, and R95 together coordinate Mo-molybdopterin. An MOSC N-terminal region region spans residues 96–186 (FWLVINEEGN…KMQSCRLVHF (91 aa)). The region spanning 191–338 (RPRSSRQMKA…IRVGDPVYLL (148 aa)) is the MOSC domain. Mo-molybdopterin contacts are provided by S214, R241, N243, T274, R275, C276, and Y320.

As to quaternary structure, component of a complex composed of cytochrome b5, NADH-cytochrome b5 reductase and MTARC1. It depends on Mo-molybdopterin as a cofactor.

The protein localises to the mitochondrion outer membrane. The protein resides in the membrane. The enzyme catalyses N(omega)-hydroxy-L-arginine + 2 Fe(II)-[cytochrome b5] + 2 H(+) = L-arginine + 2 Fe(III)-[cytochrome b5] + H2O. Catalyzes the reduction of N-oxygenated molecules, acting as a counterpart of cytochrome P450 and flavin-containing monooxygenases in metabolic cycles. As a component of prodrug-converting system, reduces a multitude of N-hydroxylated prodrugs particularly amidoximes, leading to increased drug bioavailability. May be involved in mitochondrial N(omega)-hydroxy-L-arginine (NOHA) reduction, regulating endogenous nitric oxide levels and biosynthesis. Postulated to cleave the N-OH bond of N-hydroxylated substrates in concert with electron transfer from NADH to cytochrome b5 reductase then to cytochrome b5, the ultimate electron donor that primes the active site for substrate reduction. This Mus musculus (Mouse) protein is Mitochondrial amidoxime-reducing component 1 (Mtarc1).